The following is a 494-amino-acid chain: tRNA (guanine(37)-N(1))-methyltransferase (494 aa).

Residues 1-32 constitute a mitochondrion transit peptide; that stretch reads MRIRRILYFYGNLPNTYTANVLRRLAFSCWHT. S-adenosyl-L-methionine is bound by residues His-278, 316–317, 344–345, and Asn-377; these read DL and DG. Positions 468 to 494 are disordered; that stretch reads DTGEPESKRPRTAEAFPLPHVQQSRNS.

It belongs to the class I-like SAM-binding methyltransferase superfamily. TRM5/TYW2 family. Monomer.

It is found in the mitochondrion matrix. The protein localises to the nucleus. It localises to the cytoplasm. It catalyses the reaction guanosine(37) in tRNA + S-adenosyl-L-methionine = N(1)-methylguanosine(37) in tRNA + S-adenosyl-L-homocysteine + H(+). In terms of biological role, involved in mitochondrial tRNA methylation. Specifically methylates the N1 position of guanosine-37 in various tRNAs. Methylation is not dependent on the nature of the nucleoside 5' of the target nucleoside. This is the first step in the biosynthesis of wybutosine (yW), a modified base adjacent to the anticodon of tRNAs and required for accurate decoding. This Xenopus tropicalis (Western clawed frog) protein is tRNA (guanine(37)-N(1))-methyltransferase (trmt5).